Reading from the N-terminus, the 636-residue chain is Sodium-dependent multivitamin transporter (636 aa).

12 helical membrane passes run 24–44 (FSLV…AIGL), 68–88 (CLPV…ILGV), 101–121 (FLGC…IPVF), 143–163 (ICGT…VLYA), 176–196 (LWLS…LGGL), 199–219 (VIWT…AVII), 256–276 (FWTL…VNQA), 297–317 (VFPC…VMFA), 336–356 (FVLY…GLFV), 404–424 (FGYG…GPVL), 428–448 (ISIF…GMFF), and 456–476 (AIVG…GSIV). 2 N-linked (GlcNAc...) asparagine glycosylation sites follow: N489 and N498. A helical transmembrane segment spans residues 528 to 548 (LWYSAHNSTTVIVVGLIVSLL). A disordered region spans residues 606-627 (LRASGDKEPMTEASPVHQGTSP).

Belongs to the sodium:solute symporter (SSF) (TC 2.A.21) family. As to quaternary structure, interacts with PDZD11.

It is found in the cell membrane. The protein localises to the apical cell membrane. The enzyme catalyses biotin(out) + 2 Na(+)(out) = biotin(in) + 2 Na(+)(in). The catalysed reaction is (R)-pantothenate(out) + 2 Na(+)(out) = (R)-pantothenate(in) + 2 Na(+)(in). It carries out the reaction (R)-lipoate(out) + 2 Na(+)(out) = (R)-lipoate(in) + 2 Na(+)(in). It catalyses the reaction iodide(out) + 2 Na(+)(out) = iodide(in) + 2 Na(+)(in). Functionally, sodium-dependent multivitamin transporter that mediates the electrogenic transport of pantothenate, biotin, lipoate and iodide. Functions as a Na(+)-coupled substrate symporter where the stoichiometry of Na(+):substrate is 2:1, creating an electrochemical Na(+) gradient used as driving force for substrate uptake. Required for biotin and pantothenate uptake in the intestine across the brush border membrane. Plays a role in the maintenance of intestinal mucosa integrity, by providing the gut mucosa with biotin. Contributes to the luminal uptake of biotin and pantothenate into the brain across the blood-brain barrier. This Oryctolagus cuniculus (Rabbit) protein is Sodium-dependent multivitamin transporter (SLC5A6).